Consider the following 211-residue polypeptide: Uracil phosphoribosyltransferase (211 aa).

5-phospho-alpha-D-ribose 1-diphosphate-binding positions include Arg-78, Arg-103, and 130–138 (DPMLATGGT). Residues Ile-196 and 201 to 203 (GDA) each bind uracil. Asp-202 contributes to the 5-phospho-alpha-D-ribose 1-diphosphate binding site.

Belongs to the UPRTase family. Requires Mg(2+) as cofactor.

It catalyses the reaction UMP + diphosphate = 5-phospho-alpha-D-ribose 1-diphosphate + uracil. It participates in pyrimidine metabolism; UMP biosynthesis via salvage pathway; UMP from uracil: step 1/1. With respect to regulation, allosterically activated by GTP. Catalyzes the conversion of uracil and 5-phospho-alpha-D-ribose 1-diphosphate (PRPP) to UMP and diphosphate. This Beutenbergia cavernae (strain ATCC BAA-8 / DSM 12333 / CCUG 43141 / JCM 11478 / NBRC 16432 / NCIMB 13614 / HKI 0122) protein is Uracil phosphoribosyltransferase.